The chain runs to 847 residues: Glucans biosynthesis glucosyltransferase H (847 aa).

The Cytoplasmic portion of the chain corresponds to 1 to 138 (MNKTTEYIDA…KWRTVGTIRR (138 aa)). Residues 139–156 (YILLILTLAQTVVATWYM) form a helical membrane-spanning segment. The Periplasmic portion of the chain corresponds to 157-193 (KTILPYQGWALINPMDMVGQDIWVSFMQLLPYMLQTG). Residues 194-216 (ILILFAVLFCWVSAGFWTALMGF) form a helical membrane-spanning segment. At 217–511 (LQLLIGRDKY…LVKGMHPVHR (295 aa)) the chain is on the cytoplasmic side. The chain crosses the membrane as a helical span at residues 512–534 (AVFLTGVMSYLSAPLWFMFLALS). The Periplasmic segment spans residues 535–567 (TALQVVHALTEPQYFLQPRQLFPVWPQWRPELA). The chain crosses the membrane as a helical span at residues 568–590 (IALFASTMVLLFLPKLLSIMLIW). Residues 591–602 (CKGTKEYGGFWR) are Cytoplasmic-facing. The chain crosses the membrane as a helical span at residues 603–625 (VTLSLLLEVLFSVLLAPVRMLFH). The Periplasmic segment spans residues 626–679 (TVFVVSAFLGWEVVWNSPQRDDDSTPWGEAFMRHGSQLLLGLVWAVGMAWLDLR). Residues 680 to 702 (FLFWLAPIVFSLILSPFVSVISS) form a helical membrane-spanning segment. Over 703–847 (RSTVGLRTKR…ALQGRTSSAR (145 aa)) the chain is Cytoplasmic.

It belongs to the glycosyltransferase 2 family. OpgH subfamily.

It is found in the cell inner membrane. It participates in glycan metabolism; osmoregulated periplasmic glucan (OPG) biosynthesis. Its function is as follows. Involved in the biosynthesis of osmoregulated periplasmic glucans (OPGs). The sequence is that of Glucans biosynthesis glucosyltransferase H from Salmonella typhimurium (strain LT2 / SGSC1412 / ATCC 700720).